The chain runs to 259 residues: Kallikrein 1-related peptidase b22 (259 aa).

The first 17 residues, 1-17 (MRFLILFLTLSLGGIDA), serve as a signal peptide directing secretion. Residues 18 to 24 (APPVQSR) constitute a propeptide, activation peptide. One can recognise a Peptidase S1 domain in the interval 25-256 (ILGGFKCEKN…FTSWIKDTMA (232 aa)). 5 cysteine pairs are disulfide-bonded: cysteine 31–cysteine 171, cysteine 50–cysteine 66, cysteine 150–cysteine 217, cysteine 182–cysteine 196, and cysteine 207–cysteine 232. Histidine 65 (charge relay system) is an active-site residue. N-linked (GlcNAc...) asparagine glycosylation occurs at asparagine 102. The active-site Charge relay system is the aspartate 118. Serine 211 acts as the Charge relay system in catalysis.

It belongs to the peptidase S1 family. Kallikrein subfamily.

The catalysed reaction is Preferential cleavage of Arg-|-Xaa bonds in small molecule substrates. Highly selective action to release kallidin (lysyl-bradykinin) from kininogen involves hydrolysis of Met-|-Xaa or Leu-|-Xaa.. Glandular kallikreins cleave Met-Lys and Arg-Ser bonds in kininogen to release Lys-bradykinin. This chain is Kallikrein 1-related peptidase b22 (Klk1b22), found in Mus musculus (Mouse).